Consider the following 136-residue polypeptide: Histone H3.3 (136 aa).

The segment at 1–41 (MARTKQTARKSTGVKAPRKQLATKAARKSAPVSGGVKKPHK) is disordered.

It belongs to the histone H3 family. The nucleosome is a histone octamer containing two molecules each of H2A, H2B, H3 and H4 assembled in one H3-H4 heterotetramer and two H2A-H2B heterodimers. The octamer wraps approximately 147 bp of DNA. In terms of processing, acetylated. Acetylation occurs almost exclusively in the MAC.

The protein resides in the nucleus. It is found in the chromosome. In terms of biological role, macronuclear replacement variant which replaces conventional H3 in a subset of nucleosomes. Nucleosomes wrap and compact DNA into chromatin, limiting DNA accessibility to the cellular machineries which require DNA as a template. Histones thereby play a central role in transcription regulation, DNA repair, DNA replication and chromosomal stability. DNA accessibility is regulated via a complex set of post-translational modifications of histones, also called histone code, and nucleosome remodeling. Functions redundantly to H3.4. H3.3 deposition into chromatin is mainly transcription-associated and DNA replication-independent, but it can also enter a replication-coupled pathway. Although not essential for vegetative growth, minor H3 variants are required for producing viable conjugation progeny by affecting late developmental stages of conjugation. This Tetrahymena pyriformis protein is Histone H3.3.